Here is a 181-residue protein sequence, read N- to C-terminus: Translation initiation factor IF-3 (181 aa).

Belongs to the IF-3 family. Monomer.

Its subcellular location is the cytoplasm. Functionally, IF-3 binds to the 30S ribosomal subunit and shifts the equilibrium between 70S ribosomes and their 50S and 30S subunits in favor of the free subunits, thus enhancing the availability of 30S subunits on which protein synthesis initiation begins. This Cereibacter sphaeroides (strain ATCC 17023 / DSM 158 / JCM 6121 / CCUG 31486 / LMG 2827 / NBRC 12203 / NCIMB 8253 / ATH 2.4.1.) (Rhodobacter sphaeroides) protein is Translation initiation factor IF-3.